An 864-amino-acid polypeptide reads, in one-letter code: Leukocyte tyrosine kinase receptor (864 aa).

Positions 1–16 are cleaved as a signal peptide; the sequence is MGCWGQLLVWFGAAGA. Over 17 to 424 the chain is Extracellular; it reads ILCSSPGSQE…CMDLHKPPGP (408 aa). Residues 30 to 40 show a composition bias toward low complexity; the sequence is RSSPLPLASPS. Positions 30 to 64 are disordered; sequence RSSPLPLASPSPRDPKVSAPPSILEPASPLNSPGT. Intrachain disulfides connect Cys73/Cys86 and Cys168/Cys179. The disordered stretch occupies residues 239–297; that stretch reads YLRPRDRGRTQASPEKLENRSEAPGSGGRGGAAGGGGGWTSRAPSPQAGRSLQEGAEGG. Residues 241-259 show a composition bias toward basic and acidic residues; the sequence is RPRDRGRTQASPEKLENRS. An N-linked (GlcNAc...) asparagine glycan is attached at Asn257. The span at 263–277 shows a compositional bias: gly residues; that stretch reads GSGGRGGAAGGGGGW. Residues Cys300 and Cys322 are joined by a disulfide bond. N-linked (GlcNAc...) asparagine glycosylation is found at Asn380 and Asn412. Residues 425–449 traverse the membrane as a helical segment; that stretch reads LVLMVAVVATSTLSLLMVCGVLILV. Residues 450–864 lie on the Cytoplasmic side of the membrane; sequence KQKKWQGLQE…QNLWNPTYRS (415 aa). Residues 510-786 form the Protein kinase domain; the sequence is VTLLRALGHG…LQYCTQDPDV (277 aa). ATP is bound by residues 516–524 and Lys544; that span reads LGHGAFGEV. Asp643 serves as the catalytic Proton acceptor. Phosphotyrosine; by autocatalysis is present on Tyr676. Disordered regions lie at residues 790-830 and 842-864; these read LLPM…KLKS and SGLK…TYRS. The span at 852-864 shows a compositional bias: polar residues; it reads LQPQNLWNPTYRS.

It belongs to the protein kinase superfamily. Tyr protein kinase family. Insulin receptor subfamily. Homodimer; homodimerizes following ligand-binding. Part of a complex including LTK, TNK2 and GRB2, in which GRB2 promotes LTK recruitment by TNK2. In terms of processing, phosphorylated at tyrosine residues by autocatalysis, which activates kinase activity. As to expression, expressed in non-hematopoietic cell lines and T- and B-cell lines.

The protein localises to the cell membrane. The enzyme catalyses L-tyrosyl-[protein] + ATP = O-phospho-L-tyrosyl-[protein] + ADP + H(+). Activated by ligand-binding, leading to homodimerization and autophosphorylation. In terms of biological role, receptor with a tyrosine-protein kinase activity. Following activation by ALKAL1 or ALKAL2 ligands at the cell surface, transduces an extracellular signal into an intracellular response. Ligand-binding to the extracellular domain induces tyrosine kinase activation, leading to activation of the mitogen-activated protein kinase (MAPK) pathway. Phosphorylates almost exclusively at the first tyrosine of the Y-x-x-x-Y-Y motif. The exact function of this protein is not known; studies with chimeric proteins demonstrate its ability to promote growth and specifically neurite outgrowth, and cell survival. Involved in regulation of the secretory pathway involving endoplasmic reticulum (ER) export sites (ERESs) and ER to Golgi transport. The chain is Leukocyte tyrosine kinase receptor from Homo sapiens (Human).